Here is a 467-residue protein sequence, read N- to C-terminus: Chromosomal replication initiator protein DnaA (467 aa).

Positions 1–90 (MSLSLWQQCL…KPVTQTPQAA (90 aa)) are domain I, interacts with DnaA modulators. Positions 91-130 (VTSNVAAPALVAQTQPQRAAPSTRSGWDNVPAPAEPTYRS) are domain II. The segment at 131-347 (NVNVKHTFDN…GALNRVIANA (217 aa)) is domain III, AAA+ region. ATP is bound by residues Gly-175, Gly-177, Lys-178, and Thr-179. The domain IV, binds dsDNA stretch occupies residues 348 to 467 (NFTGRAITID…FSNLIRTLSS (120 aa)).

This sequence belongs to the DnaA family. In terms of assembly, oligomerizes as a right-handed, spiral filament on DNA at oriC.

The protein localises to the cytoplasm. In terms of biological role, plays an essential role in the initiation and regulation of chromosomal replication. ATP-DnaA binds to the origin of replication (oriC) to initiate formation of the DNA replication initiation complex once per cell cycle. Binds the DnaA box (a 9 base pair repeat at the origin) and separates the double-stranded (ds)DNA. Forms a right-handed helical filament on oriC DNA; dsDNA binds to the exterior of the filament while single-stranded (ss)DNA is stabiized in the filament's interior. The ATP-DnaA-oriC complex binds and stabilizes one strand of the AT-rich DNA unwinding element (DUE), permitting loading of DNA polymerase. After initiation quickly degrades to an ADP-DnaA complex that is not apt for DNA replication. Binds acidic phospholipids. This Shigella dysenteriae serotype 1 (strain Sd197) protein is Chromosomal replication initiator protein DnaA.